Consider the following 359-residue polypeptide: Mitochondrial glutathione transporter SLC25A39 (359 aa).

The Mitochondrial intermembrane segment spans residues 1–14; it reads MADQDPGGISPLQQ. 3 Solcar repeats span residues 9 to 151, 159 to 243, and 253 to 347; these read ISPL…LKAF, SDLY…VKSW, and TSVG…GKNF. The chain crosses the membrane as a helical span at residues 15–35; that stretch reads MVASGAGAVVTSLFMTPLDVV. Residues 36–121 are Mitochondrial matrix-facing; it reads KVRLQSQRPS…VKIVRHEGTR (86 aa). [2Fe-2S] cluster is bound by residues Cys-74, Cys-78, Cys-88, and Cys-94. A helical membrane pass occupies residues 122 to 142; that stretch reads TLWSGLPATLVMTVPATAAYF. The Mitochondrial intermembrane segment spans residues 143 to 164; sequence TAYDQLKAFLCGRALTSDLYAP. The chain crosses the membrane as a helical span at residues 165-185; the sequence is MVAGALARLGTVTVISPLELV. The Mitochondrial matrix portion of the chain corresponds to 186 to 214; sequence RTKLQAQHLSYRELGTCVRAAVAQGGWRS. A helical membrane pass occupies residues 215–235; sequence LWLGWGPTALRDVPFSALYWF. Topologically, residues 236–255 are mitochondrial intermembrane; the sequence is NYELVKSWLSGLRPKDQTSV. A helical membrane pass occupies residues 256 to 276; that stretch reads GISFVAGGISGMVAATLTLPF. The Mitochondrial matrix segment spans residues 277-317; it reads DVVKTQRQVALGAVEALRVMPLNTDSTWLLLRRILAESGTR. A helical membrane pass occupies residues 318–338; it reads GLFAGFLPRIIKAAPSCAIMI. Over 339–359 the chain is Mitochondrial intermembrane; it reads STYEFGKNFFQRLNREQLLSP.

Belongs to the mitochondrial carrier (TC 2.A.29) family. Post-translationally, cleaved and degraded by AFG3L2; degradation by AFG3L2 is regulated by the ability of SLC25A39 to bind iron-sulfur. In absence of mitochondrial glutathione, SLC25A39 binds iron-sulfur, preventing cleavage and degradation by AFG3L2. The presence of mitochondrial glutathione prevents iron-sulfur-binding to SLC25A39, promoting cleavage and degradation by AFG3L2.

It localises to the mitochondrion inner membrane. The catalysed reaction is glutathione(in) = glutathione(out). With respect to regulation, the activity of SLC25A39 is regulated by levels of mitochondrial glutathione via its ability to bind [2Fe-2S] iron-sulfur cluster. Upon physiological levels of mitochondrial glutathione, glutathione prevents iron-sulfur-binding to SLC25A39 promoting cleavage and degradation by AFG3L2. Upon depletion of mitochondrial glutathione, SLC25A39 binds iron-sulfur, preventing cleavage and degradation by AFG3L2. Functionally, mitochondrial transporter required for glutathione import into mitochondria. Glutathione, which plays key roles in oxidative metabolism, is produced exclusively in the cytosol and is imported in many organelles. Mitochondrial glutathione is required for the activity and stability of proteins containing iron-sulfur clusters, as well as erythropoiesis. This is Mitochondrial glutathione transporter SLC25A39 (SLC25A39) from Bos taurus (Bovine).